The primary structure comprises 260 residues: Proansamycin X synthase (260 aa).

Cys73 serves as the catalytic Acyl-thioester intermediate. Residues His111 and Asp126 contribute to the active site.

Belongs to the arylamine N-acetyltransferase family.

It functions in the pathway antibiotic biosynthesis; rifamycin B biosynthesis. Catalyzes the release of the completed linear polyketide from the rif PKS by forming an intramolecular amide bond, in this way terminating polyketide assembly and forming the macrocyclic compound proansamycin X, an intermediate in the rifamycin B biosynthesis. The polypeptide is Proansamycin X synthase (rifF) (Amycolatopsis mediterranei (strain S699) (Nocardia mediterranei)).